The sequence spans 392 residues: DNA replication and repair protein RecF (392 aa).

Position 30–37 (30–37) interacts with ATP; the sequence is GPNAAGKT.

It belongs to the RecF family.

It localises to the cytoplasm. Its function is as follows. The RecF protein is involved in DNA metabolism; it is required for DNA replication and normal SOS inducibility. RecF binds preferentially to single-stranded, linear DNA. It also seems to bind ATP. The sequence is that of DNA replication and repair protein RecF from Chloroflexus aggregans (strain MD-66 / DSM 9485).